Consider the following 55-residue polypeptide: MKKLTDKQKSRFWEQRRNVNFQQSRRLEGIEIPLVTLTADEALVRLDELRRHYER.

This is an uncharacterized protein from Salmonella typhimurium (strain LT2 / SGSC1412 / ATCC 700720).